The sequence spans 313 residues: Probable cytochrome c oxidase subunit 2 (313 aa).

The RPE1 insert domain occupies 5 to 51; sequence RYWSKQSYKKLKVDQEHNTTEYTNVCNSTSLGSTYTLPLKMELWKIY. The next 3 helical transmembrane spans lie at 39-59, 94-114, and 131-151; these read YTLPLKMELWKIYITLIYFLI, LLYIGTAIVLFVAGLLGFVCI, and LLIEIIWTVIPIIILVIIAVP. Cu cation contacts are provided by His233, Cys268, Cys272, and His276.

Belongs to the cytochrome c oxidase subunit 2 family. The cofactor is Cu cation. It depends on heme as a cofactor.

The protein resides in the cell membrane. It catalyses the reaction 4 Fe(II)-[cytochrome c] + O2 + 8 H(+)(in) = 4 Fe(III)-[cytochrome c] + 2 H2O + 4 H(+)(out). In terms of biological role, subunits I and II form the functional core of the enzyme complex. Electrons originating in cytochrome c are transferred via heme a and Cu(A) to the binuclear center formed by heme a3 and Cu(B). This is Probable cytochrome c oxidase subunit 2 (ctaC) from Rickettsia prowazekii (strain Madrid E).